Reading from the N-terminus, the 455-residue chain is Ribosomal protein uS12 methylthiotransferase RimO (455 aa).

In terms of domain architecture, MTTase N-terminal spans 30–140; the sequence is PTIGMVSLGC…VLDAVHGAVP (111 aa). [4Fe-4S] cluster contacts are provided by Cys39, Cys75, Cys104, Cys171, Cys175, and Cys178. The Radical SAM core domain occupies 157–386; that stretch reads LTPRHFSYLK…MEKAQAISEV (230 aa). The TRAM domain occupies 389–455; the sequence is AAKVGRRIEV…GEYDIWGRPV (67 aa).

It belongs to the methylthiotransferase family. RimO subfamily. Requires [4Fe-4S] cluster as cofactor.

The protein resides in the cytoplasm. The catalysed reaction is L-aspartate(89)-[ribosomal protein uS12]-hydrogen + (sulfur carrier)-SH + AH2 + 2 S-adenosyl-L-methionine = 3-methylsulfanyl-L-aspartate(89)-[ribosomal protein uS12]-hydrogen + (sulfur carrier)-H + 5'-deoxyadenosine + L-methionine + A + S-adenosyl-L-homocysteine + 2 H(+). Functionally, catalyzes the methylthiolation of an aspartic acid residue of ribosomal protein uS12. The chain is Ribosomal protein uS12 methylthiotransferase RimO from Cereibacter sphaeroides (strain ATCC 17023 / DSM 158 / JCM 6121 / CCUG 31486 / LMG 2827 / NBRC 12203 / NCIMB 8253 / ATH 2.4.1.) (Rhodobacter sphaeroides).